We begin with the raw amino-acid sequence, 144 residues long: UPF0102 protein BTH_I3148 (144 aa).

Positions 1–20 (MCHARAARQATGEAEAAPRD) are disordered.

It belongs to the UPF0102 family.

The protein is UPF0102 protein BTH_I3148 of Burkholderia thailandensis (strain ATCC 700388 / DSM 13276 / CCUG 48851 / CIP 106301 / E264).